The following is a 154-amino-acid chain: Cytochrome c' (154 aa).

The first 23 residues, 1-23, serve as a signal peptide directing secretion; sequence MKHVLASTAAGLMALGLASSAIA. 6 residues coordinate heme c: R35, Q36, R95, C144, C147, and H148.

In terms of assembly, homodimer. In terms of processing, binds 1 heme c group covalently per subunit.

Functionally, cytochrome c' is the most widely occurring bacterial c-type cytochrome. Cytochromes c' are high-spin proteins and the heme has no sixth ligand. Their exact function is not known. The protein is Cytochrome c' (cycA) of Allochromatium vinosum (strain ATCC 17899 / DSM 180 / NBRC 103801 / NCIMB 10441 / D) (Chromatium vinosum).